Reading from the N-terminus, the 142-residue chain is Hemoglobin subunit alpha-I/II (142 aa).

One can recognise a Globin domain in the interval 2–142 (VLSAADKGNV…VSTVLTSKYR (141 aa)). S4 carries the post-translational modification Phosphoserine. N6-succinyllysine is present on residues K8 and K12. K17 carries the post-translational modification N6-acetyllysine; alternate. N6-succinyllysine; alternate is present on K17. A Phosphotyrosine modification is found at Y25. S36 bears the Phosphoserine mark. Residue K41 is modified to N6-succinyllysine. S50 carries the post-translational modification Phosphoserine. H59 contacts O2. H88 is a heme b binding site. Position 103 is a phosphoserine (S103). T109 carries the phosphothreonine modification. S125 carries the phosphoserine modification. Phosphothreonine occurs at positions 135 and 138. S139 carries the phosphoserine modification.

This sequence belongs to the globin family. In terms of assembly, heterotetramer of two alpha chains and two beta chains. As to expression, red blood cells.

Functionally, involved in oxygen transport from the lung to the various peripheral tissues. This Bison bonasus (European bison) protein is Hemoglobin subunit alpha-I/II.